Consider the following 255-residue polypeptide: Putative glutamine amidotransferase YafJ (255 aa).

Cys-2 serves as the catalytic For GATase activity. A Glutamine amidotransferase type-2 domain is found at 2–251 (CELLGMSANV…PGEWRLFCLG (250 aa)).

The chain is Putative glutamine amidotransferase YafJ (yafJ) from Escherichia coli (strain K12).